Reading from the N-terminus, the 358-residue chain is GMP reductase (358 aa).

Residues 26–27 (SR), lysine 78, 130–132 (DVA), and 181–182 (IG) each bind NADP(+). Glycine 182, glycine 184, and cysteine 187 together coordinate K(+). Catalysis depends on cysteine 187, which acts as the Thioimidate intermediate. Threonine 189 functions as the Proton donor/acceptor in the catalytic mechanism. Arginine 190 serves as a coordination point for K(+). GMP contacts are provided by residues 220–222 (DGG), 243–244 (GG), 269–271 (GMS), and 287–291 (RASEG). Residues methionine 270, 286 to 287 (YR), and 315 to 318 (SACT) each bind NADP(+).

Belongs to the IMPDH/GMPR family. GuaC type 1 subfamily. Homotetramer.

It carries out the reaction IMP + NH4(+) + NADP(+) = GMP + NADPH + 2 H(+). Functionally, catalyzes the irreversible NADPH-dependent deamination of GMP to IMP. It functions in the conversion of nucleobase, nucleoside and nucleotide derivatives of G to A nucleotides, and in maintaining the intracellular balance of A and G nucleotides. This Caenorhabditis elegans protein is GMP reductase.